The primary structure comprises 435 residues: 3-ketoacyl-CoA thiolase (435 aa).

Cysteine 98 serves as the catalytic Acyl-thioester intermediate. Residues histidine 391 and cysteine 421 each act as proton acceptor in the active site.

It belongs to the thiolase-like superfamily. Thiolase family. As to quaternary structure, heterotetramer of two alpha chains (FadJ) and two beta chains (FadI).

It localises to the cytoplasm. The enzyme catalyses an acyl-CoA + acetyl-CoA = a 3-oxoacyl-CoA + CoA. The protein operates within lipid metabolism; fatty acid beta-oxidation. Catalyzes the final step of fatty acid oxidation in which acetyl-CoA is released and the CoA ester of a fatty acid two carbons shorter is formed. The sequence is that of 3-ketoacyl-CoA thiolase from Vibrio cholerae serotype O1 (strain ATCC 39315 / El Tor Inaba N16961).